The sequence spans 359 residues: NF-kappa-B inhibitor beta (359 aa).

Ser19 and Ser23 each carry phosphoserine; by RPS6KA1. 3 ANK repeats span residues Asp57–Tyr86, Leu93–Val122, and Gly126–Arg155. The interval His153–Glu194 is disordered. Residues Thr160–Thr172 are compositionally biased toward polar residues. 3 ANK repeats span residues Asp206–Lys235, Cys240–Ala269, and Gly273–Glu302. Positions Ala298–Ala359 are disordered. Phosphoserine is present on residues Ser313 and Ser318. Positions Ser318–Asp331 are enriched in acidic residues. The segment covering Pro344–Ala359 has biased composition (pro residues).

It belongs to the NF-kappa-B inhibitor family. Interacts with THRB (via ligand-binding domain). Interacts with RELA and REL. Interacts with COMMD1. Interacts with inhibitor kappa B-interacting Ras-like NKIRAS1 and NKIRAS2. Phosphorylated by RPS6KA1; followed by degradation. Interaction with NKIRAS1 and NKIRAS2 probably prevents phosphorylation. In terms of tissue distribution, highly expressed in testis followed by spleen.

The protein localises to the cytoplasm. The protein resides in the nucleus. Functionally, inhibits NF-kappa-B by complexing with and trapping it in the cytoplasm. However, the unphosphorylated form resynthesized after cell stimulation is able to bind NF-kappa-B allowing its transport to the nucleus and protecting it to further NFKBIA-dependent inactivation. Association with inhibitor kappa B-interacting NKIRAS1 and NKIRAS2 prevent its phosphorylation rendering it more resistant to degradation, explaining its slower degradation. The chain is NF-kappa-B inhibitor beta (Nfkbib) from Mus musculus (Mouse).